A 222-amino-acid chain; its full sequence is Deoxyribose-phosphate aldolase (222 aa).

Aspartate 91 acts as the Proton donor/acceptor in catalysis. The active-site Schiff-base intermediate with acetaldehyde is the lysine 153. The active-site Proton donor/acceptor is lysine 182.

It belongs to the DeoC/FbaB aldolase family. DeoC type 1 subfamily.

The protein localises to the cytoplasm. The catalysed reaction is 2-deoxy-D-ribose 5-phosphate = D-glyceraldehyde 3-phosphate + acetaldehyde. It participates in carbohydrate degradation; 2-deoxy-D-ribose 1-phosphate degradation; D-glyceraldehyde 3-phosphate and acetaldehyde from 2-deoxy-alpha-D-ribose 1-phosphate: step 2/2. Catalyzes a reversible aldol reaction between acetaldehyde and D-glyceraldehyde 3-phosphate to generate 2-deoxy-D-ribose 5-phosphate. The protein is Deoxyribose-phosphate aldolase of Mycoplasma capricolum subsp. capricolum (strain California kid / ATCC 27343 / NCTC 10154).